The following is a 199-amino-acid chain: Guanylate kinase (199 aa).

The Guanylate kinase-like domain occupies 19–198 (VTVAVVSGPT…AVAHLVELLS (180 aa)). Position 26 to 33 (26 to 33 (GPTAVGKG)) interacts with ATP.

The protein belongs to the guanylate kinase family.

It is found in the cytoplasm. The catalysed reaction is GMP + ATP = GDP + ADP. Its function is as follows. Essential for recycling GMP and indirectly, cGMP. In Cutibacterium acnes (strain DSM 16379 / KPA171202) (Propionibacterium acnes), this protein is Guanylate kinase.